The following is a 399-amino-acid chain: Homoserine O-acetyltransferase (399 aa).

The AB hydrolase-1 domain maps to 63–372 (NAILVCHALT…TDRGHDAFLL (310 aa)). Catalysis depends on Ser-168, which acts as the Nucleophile. Arg-238 contributes to the substrate binding site. Residues Asp-334 and His-367 contribute to the active site. Position 368 (Asp-368) interacts with substrate.

The protein belongs to the AB hydrolase superfamily. MetX family. As to quaternary structure, homodimer.

It is found in the cytoplasm. It carries out the reaction L-homoserine + acetyl-CoA = O-acetyl-L-homoserine + CoA. It functions in the pathway amino-acid biosynthesis; L-methionine biosynthesis via de novo pathway; O-acetyl-L-homoserine from L-homoserine: step 1/1. Its function is as follows. Transfers an acetyl group from acetyl-CoA to L-homoserine, forming acetyl-L-homoserine. In Nitrobacter hamburgensis (strain DSM 10229 / NCIMB 13809 / X14), this protein is Homoserine O-acetyltransferase.